The following is a 275-amino-acid chain: Dermonecrotic toxin SpeSicTox-betaIIA2iii (275 aa).

Residue His-5 is part of the active site. Mg(2+) is bound by residues Glu-25 and Asp-27. Catalysis depends on His-41, which acts as the Nucleophile. 2 disulfide bridges follow: Cys-45/Cys-51 and Cys-47/Cys-190. Residue Asp-85 participates in Mg(2+) binding.

The protein belongs to the arthropod phospholipase D family. Class II subfamily. Mg(2+) is required as a cofactor. As to expression, expressed by the venom gland.

It is found in the secreted. The catalysed reaction is an N-(acyl)-sphingosylphosphocholine = an N-(acyl)-sphingosyl-1,3-cyclic phosphate + choline. It catalyses the reaction an N-(acyl)-sphingosylphosphoethanolamine = an N-(acyl)-sphingosyl-1,3-cyclic phosphate + ethanolamine. The enzyme catalyses a 1-acyl-sn-glycero-3-phosphocholine = a 1-acyl-sn-glycero-2,3-cyclic phosphate + choline. It carries out the reaction a 1-acyl-sn-glycero-3-phosphoethanolamine = a 1-acyl-sn-glycero-2,3-cyclic phosphate + ethanolamine. Dermonecrotic toxins cleave the phosphodiester linkage between the phosphate and headgroup of certain phospholipids (sphingolipid and lysolipid substrates), forming an alcohol (often choline) and a cyclic phosphate. This toxin acts on sphingomyelin (SM). It may also act on ceramide phosphoethanolamine (CPE), lysophosphatidylcholine (LPC) and lysophosphatidylethanolamine (LPE), but not on lysophosphatidylserine (LPS), and lysophosphatidylglycerol (LPG). It acts by transphosphatidylation, releasing exclusively cyclic phosphate products as second products. Induces dermonecrosis, hemolysis, increased vascular permeability, edema, inflammatory response, and platelet aggregation. This Sicarius peruensis (Six-eyed sand spider) protein is Dermonecrotic toxin SpeSicTox-betaIIA2iii.